A 113-amino-acid polypeptide reads, in one-letter code: U11-theraphotoxin-Hhn1j (113 aa).

An N-terminal signal peptide occupies residues 1–21 (MNTVRVTFLLVFVLAVSLGQA). A propeptide spanning residues 22–74 (DKDENRMEMQEKTEQGKSYLDFAENLLLQKLEELEAKLLEEDSEESRNSRQKR) is cleaved from the precursor. The segment covering 60 to 69 (LEEDSEESRN) has biased composition (basic and acidic residues). The tract at residues 60 to 83 (LEEDSEESRNSRQKRCIGEGVPCD) is disordered. 3 cysteine pairs are disulfide-bonded: cysteine 75/cysteine 90, cysteine 82/cysteine 95, and cysteine 89/cysteine 110.

Belongs to the neurotoxin 14 (magi-1) family. 01 (HNTX-16) subfamily. Expressed by the venom gland.

The protein localises to the secreted. Probable ion channel inhibitor. The polypeptide is U11-theraphotoxin-Hhn1j (Cyriopagopus hainanus (Chinese bird spider)).